Consider the following 217-residue polypeptide: Small ribosomal subunit protein uS3 (217 aa).

Positions 40–110 constitute a KH type-2 domain; the sequence is IRDLINKGFN…EVYINIHEVR (71 aa).

It belongs to the universal ribosomal protein uS3 family. Part of the 30S ribosomal subunit. Forms a tight complex with proteins S10 and S14.

In terms of biological role, binds the lower part of the 30S subunit head. Binds mRNA in the 70S ribosome, positioning it for translation. The polypeptide is Small ribosomal subunit protein uS3 (Rickettsia africae (strain ESF-5)).